Consider the following 301-residue polypeptide: Fluoroquinolones export ATP-binding protein MT2762 (301 aa).

One can recognise an ABC transporter domain in the interval 18–246 (IRVRGLTFRY…RSRRRVRVEY (229 aa)). Position 52 to 59 (52 to 59 (GPSGAGKS)) interacts with ATP.

The protein belongs to the ABC transporter superfamily. In terms of assembly, the complex is composed of 2 ATP-binding proteins and 2 transmembrane proteins.

It localises to the cell membrane. Its function is as follows. Part of the ABC transporter complex involved in fluoroquinolones export. Probably responsible for energy coupling to the transport system. The polypeptide is Fluoroquinolones export ATP-binding protein MT2762 (Mycobacterium tuberculosis (strain CDC 1551 / Oshkosh)).